The following is a 521-amino-acid chain: GMP synthase [glutamine-hydrolyzing] (521 aa).

A Glutamine amidotransferase type-1 domain is found at 8-203 (KILILDFGAQ…VVDICGCQTL (196 aa)). The active-site Nucleophile is Cys85. Active-site residues include His177 and Glu179. Positions 204 to 396 (WTAANIIDDQ…LGLPRTMVYR (193 aa)) constitute a GMPS ATP-PPase domain. Residue 231–237 (SGGVDSS) coordinates ATP.

As to quaternary structure, homodimer.

The catalysed reaction is XMP + L-glutamine + ATP + H2O = GMP + L-glutamate + AMP + diphosphate + 2 H(+). The protein operates within purine metabolism; GMP biosynthesis; GMP from XMP (L-Gln route): step 1/1. Catalyzes the synthesis of GMP from XMP. In Xanthomonas oryzae pv. oryzae (strain MAFF 311018), this protein is GMP synthase [glutamine-hydrolyzing].